A 552-amino-acid polypeptide reads, in one-letter code: Transcription factor lcsF (552 aa).

Disordered stretches follow at residues 1 to 132 (MAPA…DLDP), 169 to 209 (TSSY…ASLS), 232 to 258 (EATS…HWSS), and 297 to 349 (ELTS…QHGA). The basic motif stretch occupies residues 31–55 (KDRKEKKRIQNRVAQRSYRSRMKAR). The 46-residue stretch at 31-76 (KDRKEKKRIQNRVAQRSYRSRMKARLGELQSRLQAHEEQKAKEEAE) folds into the bZIP domain. A leucine-zipper region spans residues 56-63 (LGELQSRL). A compositionally biased stretch (basic and acidic residues) spans 64 to 79 (QAHEEQKAKEEAERCD). Polar residues-rich tracts occupy residues 98-119 (TPPS…NSAS) and 169-186 (TSSY…SLSQ). The span at 298–347 (LTSTGDLPNATWRPSQQFSGPETTPRSHNAENPTQQQSPINDDTPSTTQH) shows a compositional bias: polar residues.

Belongs to the bZIP family.

Its subcellular location is the nucleus. In terms of biological role, transcription factor that regulates the expression of the gene cluster that mediates the biosynthesis of the lipopeptide antibiotics leucinostatins that show extensive biological activities, including antimalarial, antiviral, antibacterial, antifungal, and antitumor activities, as well as phytotoxic. All 20 genes in the cluster are up-regulated to some extent by lcsF, with the exception of lcsL and lcsP, which are down-regulated. The chain is Transcription factor lcsF from Purpureocillium lilacinum (Paecilomyces lilacinus).